Consider the following 98-residue polypeptide: Large ribosomal subunit protein uL23 (98 aa).

Belongs to the universal ribosomal protein uL23 family. As to quaternary structure, part of the 50S ribosomal subunit. Contacts protein L29, and trigger factor when it is bound to the ribosome.

One of the early assembly proteins it binds 23S rRNA. One of the proteins that surrounds the polypeptide exit tunnel on the outside of the ribosome. Forms the main docking site for trigger factor binding to the ribosome. The protein is Large ribosomal subunit protein uL23 of Bordetella petrii (strain ATCC BAA-461 / DSM 12804 / CCUG 43448).